Here is a 77-residue protein sequence, read N- to C-terminus: MIYKVLYQKDKIVNPRRETTQTLYMEADNIVQARALVEQNTPYNIELIQELTGNSLKYEQEHADFKLTAFGQTNSED.

This sequence belongs to the RNA polymerase subunit epsilon family. RNAP is composed of a core of 2 alpha, a beta and a beta' subunit. The core is associated with a delta subunit, and at least one of epsilon or omega. When a sigma factor is associated with the core the holoenzyme is formed, which can initiate transcription.

The catalysed reaction is RNA(n) + a ribonucleoside 5'-triphosphate = RNA(n+1) + diphosphate. In terms of biological role, a non-essential component of RNA polymerase (RNAP). The sequence is that of DNA-directed RNA polymerase subunit epsilon from Lactobacillus delbrueckii subsp. bulgaricus (strain ATCC 11842 / DSM 20081 / BCRC 10696 / JCM 1002 / NBRC 13953 / NCIMB 11778 / NCTC 12712 / WDCM 00102 / Lb 14).